We begin with the raw amino-acid sequence, 192 residues long: uncharacterized protein (192 aa).

The Nudix hydrolase domain maps to 29–160; sequence QRQAAVLVPI…PLDIERKQQR (132 aa). The Nudix box signature appears at 67–89; it reads GAADKTDRSIIETALREAQEEVA. Glu-83 and Glu-87 together coordinate Mg(2+).

It belongs to the Nudix hydrolase family. PCD1 subfamily. The cofactor is Mn(2+). It depends on Mg(2+) as a cofactor.

In terms of biological role, probably mediates the hydrolysis of some nucleoside diphosphate derivatives. This is an uncharacterized protein from Pectobacterium atrosepticum (strain SCRI 1043 / ATCC BAA-672) (Erwinia carotovora subsp. atroseptica).